A 194-amino-acid polypeptide reads, in one-letter code: Imidazoleglycerol-phosphate dehydratase (194 aa).

Belongs to the imidazoleglycerol-phosphate dehydratase family.

It is found in the cytoplasm. It catalyses the reaction D-erythro-1-(imidazol-4-yl)glycerol 3-phosphate = 3-(imidazol-4-yl)-2-oxopropyl phosphate + H2O. It functions in the pathway amino-acid biosynthesis; L-histidine biosynthesis; L-histidine from 5-phospho-alpha-D-ribose 1-diphosphate: step 6/9. The chain is Imidazoleglycerol-phosphate dehydratase from Bacillus velezensis (strain DSM 23117 / BGSC 10A6 / LMG 26770 / FZB42) (Bacillus amyloliquefaciens subsp. plantarum).